The primary structure comprises 186 residues: Quinone reductase (186 aa).

FMN contacts are provided by residues 13 to 20 (SLRKESYN), 80 to 83 (EHNR), and S116.

The protein belongs to the SsuE family. In terms of assembly, homotetramer. Dimer of dimers. The tetrameric configuration has a central role in chromate reductase activity. Requires FMN as cofactor.

It catalyses the reaction a quinone + NADH + H(+) = a quinol + NAD(+). The catalysed reaction is a quinone + NADPH + H(+) = a quinol + NADP(+). It carries out the reaction Cr(6+) + 2 NADH + O2 = Cr(3+) + superoxide + 2 NAD(+) + 2 H(+). The enzyme catalyses Cr(6+) + 2 NADPH + O2 = Cr(3+) + superoxide + 2 NADP(+) + 2 H(+). With respect to regulation, non-competitively inhibited by sulfate. Its function is as follows. Catalyzes the reduction of quinones. Acts by simultaneous two-electron transfer, avoiding formation of highly reactive semiquinone intermediates and producing quinols that promote tolerance of H(2)O(2). Quinone reduction is probably the primary biological role of ChrR. Can also reduce toxic chromate to insoluble and less toxic Cr(3+). Catalyzes the transfer of three electrons to Cr(6+) producing Cr(3+) and one electron to molecular oxygen. This reaction produces transiently a minimal amount of the toxic Cr(5+) species and reactive oxygen species (ROS). Chromate reduction protects the cell against chromate toxicity, but is likely a secondary activity. The protein is Quinone reductase (chrR) of Pseudomonas putida (Arthrobacter siderocapsulatus).